Here is a 286-residue protein sequence, read N- to C-terminus: N-alpha-acetyltransferase 80 (286 aa).

Positions 33 to 54 are disordered; the sequence is TFNPGPTELTLDPEHQPEETPA. Residues 60-207 enclose the N-acetyltransferase domain; sequence LTLEPVHRRP…VFTSRRLPAT (148 aa). Substrate contacts are provided by residues Arg-85 and 90 to 93; that span reads RLHS. Acetyl-CoA is bound by residues 141–143, 149–154, and Gln-179; these read VVV and GRGFGR. The interval 212–269 is disordered; sequence FPTAPSPRPPRKAPNLTAQAAPRGPKGPPLPPPPPLPECLTISPPVPSGPPSKSLLET. A compositionally biased stretch (pro residues) spans 236–248; it reads PKGPPLPPPPPLP.

It belongs to the acetyltransferase family. As to expression, strongly expressed in heart and skeletal muscle, followed by brain and pancreas, with weak expression in kidney, liver, and lung and no expression in placenta.

The protein resides in the cytoplasm. Its subcellular location is the cytosol. The enzyme catalyses N-terminal L-aspartyl-L-aspartyl-L-aspartyl-[protein] + acetyl-CoA = N-terminal N-acetyl-L-aspartyl-L-aspartyl-L-aspartyl-[protein] + CoA + H(+). The catalysed reaction is N-terminal L-glutamyl-L-glutamyl-L-glutamyl-[protein] + acetyl-CoA = N-terminal N-acetyl-L-glutamyl-L-glutamyl-L-glutamyl-[protein] + CoA + H(+). Functionally, N-alpha-acetyltransferase that specifically mediates the acetylation of the acidic amino terminus of processed forms of beta- and gamma-actin (ACTB and ACTG, respectively). N-terminal acetylation of processed beta- and gamma-actin regulates actin filament depolymerization and elongation. In vivo, preferentially displays N-terminal acetyltransferase activity towards acid N-terminal sequences starting with Asp-Asp-Asp and Glu-Glu-Glu. In vitro, shows high activity towards Met-Asp-Glu-Leu and Met-Asp-Asp-Asp. May act as a tumor suppressor. The polypeptide is N-alpha-acetyltransferase 80 (Homo sapiens (Human)).